Here is a 496-residue protein sequence, read N- to C-terminus: UDP-glycosyltransferase 84A2 (496 aa).

The active-site Proton acceptor is His-23. His-23 is a binding site for an anthocyanidin. Residues Gln-352, His-367, Trp-370, Asn-371, Ser-372, and Glu-375 each contribute to the UDP-alpha-D-glucose site. Gly-390 contributes to the an anthocyanidin binding site. UDP-alpha-D-glucose contacts are provided by Asp-391 and Gln-392.

It belongs to the UDP-glycosyltransferase family. As to expression, expressed in roots, cotyledons, leaf veins and trichomes.

The enzyme catalyses (E)-sinapate + UDP-alpha-D-glucose = 1-O-(trans-sinapoyl)-beta-D-glucose + UDP. Sinapate glucosyltransferase (SGT) required for the biosynthesis of the glucose ester sinapoylglucose and subsequently sinapoylmalate and sinapoylcholine. Is the major SGT activity in plant. Plays an important role in sinapoylation of anthocyanins. Sinapoylglucose produced by UGT84A2 is a significant source of sinapoyl moieties for anthocyanins. Indole-3-butyric acid (IBA)-specific glucosyltransferase that catalyzes the glucosylation of the auxin IBA, but not indole-3-acetic acid (IAA). May be involved in flowering regulation through IBA-mediated transcriptional repression of the auxin-response factors ARF6 and ARF8 and downstream flowering pathway genes. Can glucosylate the phytotoxic xenobiotic compound 2,4,5-trichlorophenol (TCP). The polypeptide is UDP-glycosyltransferase 84A2 (Arabidopsis thaliana (Mouse-ear cress)).